Here is a 961-residue protein sequence, read N- to C-terminus: Glycine dehydrogenase (decarboxylating) (961 aa).

At Lys-702 the chain carries N6-(pyridoxal phosphate)lysine.

The protein belongs to the GcvP family. As to quaternary structure, the glycine cleavage system is composed of four proteins: P, T, L and H. It depends on pyridoxal 5'-phosphate as a cofactor.

It catalyses the reaction N(6)-[(R)-lipoyl]-L-lysyl-[glycine-cleavage complex H protein] + glycine + H(+) = N(6)-[(R)-S(8)-aminomethyldihydrolipoyl]-L-lysyl-[glycine-cleavage complex H protein] + CO2. The glycine cleavage system catalyzes the degradation of glycine. The P protein binds the alpha-amino group of glycine through its pyridoxal phosphate cofactor; CO(2) is released and the remaining methylamine moiety is then transferred to the lipoamide cofactor of the H protein. This is Glycine dehydrogenase (decarboxylating) from Rhodopseudomonas palustris (strain BisA53).